A 90-amino-acid chain; its full sequence is Kunitz-type serine protease inhibitor C4 (90 aa).

Positions 1-24 (MSSGGLLLLLGLLTLWAELTPISG) are cleaved as a signal peptide. Residues 31–81 (CYLPADPGECMAYIRSFYYDSESKKCKEFIYGGCHGNANNFPTRDKCRQTC) form the BPTI/Kunitz inhibitor domain. 3 disulfides stabilise this stretch: Cys31-Cys81, Cys40-Cys64, and Cys56-Cys77. Positions 85–90 (RKGRHT) are excised as a propeptide.

This sequence belongs to the venom Kunitz-type family. As to expression, expressed by the venom gland.

Its subcellular location is the secreted. In terms of biological role, serine protease inhibitor. The chain is Kunitz-type serine protease inhibitor C4 from Daboia siamensis (Eastern Russel's viper).